The chain runs to 172 residues: Adenine phosphoribosyltransferase (172 aa).

This sequence belongs to the purine/pyrimidine phosphoribosyltransferase family. As to quaternary structure, homodimer.

Its subcellular location is the cytoplasm. The enzyme catalyses AMP + diphosphate = 5-phospho-alpha-D-ribose 1-diphosphate + adenine. The protein operates within purine metabolism; AMP biosynthesis via salvage pathway; AMP from adenine: step 1/1. Functionally, catalyzes a salvage reaction resulting in the formation of AMP, that is energically less costly than de novo synthesis. The protein is Adenine phosphoribosyltransferase of Clostridium acetobutylicum (strain ATCC 824 / DSM 792 / JCM 1419 / IAM 19013 / LMG 5710 / NBRC 13948 / NRRL B-527 / VKM B-1787 / 2291 / W).